The primary structure comprises 274 residues: Putative pyruvate, phosphate dikinase regulatory protein (274 aa).

153-160 contacts ADP; it reads GISRTSKT.

Belongs to the pyruvate, phosphate/water dikinase regulatory protein family. PDRP subfamily.

The catalysed reaction is N(tele)-phospho-L-histidyl/L-threonyl-[pyruvate, phosphate dikinase] + ADP = N(tele)-phospho-L-histidyl/O-phospho-L-threonyl-[pyruvate, phosphate dikinase] + AMP + H(+). The enzyme catalyses N(tele)-phospho-L-histidyl/O-phospho-L-threonyl-[pyruvate, phosphate dikinase] + phosphate + H(+) = N(tele)-phospho-L-histidyl/L-threonyl-[pyruvate, phosphate dikinase] + diphosphate. Functionally, bifunctional serine/threonine kinase and phosphorylase involved in the regulation of the pyruvate, phosphate dikinase (PPDK) by catalyzing its phosphorylation/dephosphorylation. In Bartonella henselae (strain ATCC 49882 / DSM 28221 / CCUG 30454 / Houston 1) (Rochalimaea henselae), this protein is Putative pyruvate, phosphate dikinase regulatory protein.